A 394-amino-acid polypeptide reads, in one-letter code: MAPKKQNGFMMFVNEWRNRNAEGRRMTLAEAVYHCGTIWEKMDTQQRGPYNSDAKDANAARRDKRGSLNGHGQVDKAQREAAESLMDKAQREAAESLMDMKRTTERLVLNAKMSHDLENAKFVFVAFNYFTKALTTDVYVPAEFAACEYSLKEGIRSIYSTMIDPGQIIFGQGSDALHNSSTTHDLPLPPNALGEKNMAKLYHNILDYLTKCQGEGKTPIVFTPAENIGMVKSCFRYLECEDDSRDGSGKIEVFDIQYLLFILKKEVMSVAGLNDEKINKFATDAFFKNDFFEFTAGIACQISSINTRDYHVATLIGLLPAQTINVYLGSTLRSMHEVLSDNDTKLTGYISFLFEVICGVALMFWVLQKARKELSETLLSADYNNEGKHPDVQV.

The HMG box DNA-binding region spans 2-69 (APKKQNGFMM…ARRDKRGSLN (68 aa)). Residues 44–93 (TQQRGPYNSDAKDANAARRDKRGSLNGHGQVDKAQREAAESLMDKAQREA) are disordered. Residues 73–93 (QVDKAQREAAESLMDKAQREA) show a composition bias toward basic and acidic residues.

The protein belongs to the maelstrom family.

It is found in the cytoplasm. The protein localises to the nucleus. Its function is as follows. Involved both in the piRNA and miRNA metabolic processes. As a component of the meiotic nuage, plays a central role during oogenesis by repressing transposable elements and preventing their mobilization, which is essential for the germline integrity. Repression of transposable elements is mediated via the piRNA metabolic process, which mediates the repression of transposable elements during meiosis by forming complexes composed of piRNAs and Piwi proteins and governs the repression of transposons. As a nuclear component, it is required for proper differentiation in the germline stem cell (GSC) lineage by repressing microRNA-7 (miR-7), thereby acting as an indirect regulator of bag-of-marbles (Bam). Acts by binding to the promoter of miR-7 gene and repressing its expression; miR-7 repression alleviates the Bam repression by miR-7, thereby allowing differentiation in the germline stem cell (GSC) lineage. The chain is Protein maelstrom (mael) from Drosophila sechellia (Fruit fly).